We begin with the raw amino-acid sequence, 275 residues long: NH(3)-dependent NAD(+) synthetase (275 aa).

Residue 46-53 (GISGGQDS) participates in ATP binding. D52 serves as a coordination point for Mg(2+). Residue R140 participates in deamido-NAD(+) binding. T160 is an ATP binding site. Residue E165 coordinates Mg(2+). Deamido-NAD(+) contacts are provided by K173 and D180. ATP is bound by residues K189 and T211. Position 260–261 (260–261 (HK)) interacts with deamido-NAD(+).

The protein belongs to the NAD synthetase family. In terms of assembly, homodimer.

The enzyme catalyses deamido-NAD(+) + NH4(+) + ATP = AMP + diphosphate + NAD(+) + H(+). It functions in the pathway cofactor biosynthesis; NAD(+) biosynthesis; NAD(+) from deamido-NAD(+) (ammonia route): step 1/1. Catalyzes the ATP-dependent amidation of deamido-NAD to form NAD. Uses ammonia as a nitrogen source. This is NH(3)-dependent NAD(+) synthetase from Salmonella paratyphi A (strain ATCC 9150 / SARB42).